The sequence spans 85 residues: U4-theraphotoxin-Hhn1a (85 aa).

An N-terminal signal peptide occupies residues M1–A22. Residues E23 to R48 constitute a propeptide that is removed on maturation. 3 cysteine pairs are disulfide-bonded: C52–C66, C56–C77, and C71–C82.

This sequence belongs to the neurotoxin 12 (Hwtx-2) family. 02 (Hwtx-2) subfamily. As to quaternary structure, monomer. In terms of tissue distribution, expressed by the venom gland.

The protein resides in the secreted. Functionally, neurotoxin active on both insects and mammals. The sequence is that of U4-theraphotoxin-Hhn1a from Cyriopagopus hainanus (Chinese bird spider).